Consider the following 3095-residue polypeptide: MDLIRGLDILSASPIDTEDQNLRKEKIEACRTISEQICAPSLRNTADFPRFLSIAISLLLRAHGDKDLNVYSVAEESLNRTIKILVYSYHERILFELFKVLKGKPHQHNNEKRLSTNLTDHLSQNSVTPSVPTTPNYQQSPSTQSPSHSTSNSSNNLYNNFSSNSNSNSNSNSNSSSNNNSGNTTPGNNTNNSNGNANSIFNTANQILSKPFPLKSQRIALIKFGEICSFIRPSKCRKYILSLVPPINSLLSIIEDESLQESISISMENISKILIPYLKENEVHQLIDLFSRNLQQPSAAVRRAASLSITSICRYHPRPLFEFTIEFLYNFTFPNSPPISSITSASCIPASSNTNTLQNSKILGVLFSYLQLIKLAEELSSNDIKILDGFSLKIQFFVHFILKYIQVPIDGEPYDHNIVGLSLELLQQLLVTFGPYEYSWPKPLVREVIAQLRHLCFNQQSSIRVSLKAVVLNCLAQSVKFFPKLFNDEFFKHQPSTIDSNTVTSAEDHICRDYLLNISPSDLNFKLFTPITQQQQQQQQQQQQQQQQQQQHNLTSSTMSGINSTTGVSNHTFSLEPKEEFLYYLNDSDPLLRGGTALMIGCLIRGYLETDHITSNQIYPTNIALLEDNLSIPTLLIFLLRALMDSSSITAKLACTGISECLPILSQSKFSDWALVTLRHLLCVSSSTYWLVKLEILETLSMIDYIVIEYLEQNIQQKSNVMNVVINGPNLSISTSSIKINENNNNSNNSNNNKNNSETGGAVAIPIQSKVLDFLIEQLSDNDFRVRNSAGKSLVRVIPKLVFTAPLERHSMKGISSKVRETFDVQDYENTVLRKRKIFANLSHVIGLLVNQLSNPHPDDKIRGCYGALNLICKTYSFPPDTPEQCRTLSSVLANPMLSFVGDILPLALDRVGLTWVATDFDVHIDIIEILGYLSRGAENVLGTYCHNVLRHIVRIINIATNIIQFRPTPPLKEVKSNPSGIHVNSPLLKAPTHLGSFTHSIHYIKLYSKLLTARINSITIFGIDRFSQLRQACFETLSVMLKCAGKTILPYTEEIIGYLTTHFEQEPVSVIKCINELFLVTMKPTPIVSISSLSQKSRDLNIGGGFISTGGGGGGGSGGINSSSSSLKQYEPRSIESHSSSSNSHDEMFLNSRSVFSSLLTFGTPNLKQHYDFINEVPSSHNINYSYSNSEINRIISNEDRKLNFKLFEPLIIGSMIEYQTTHSHELKIAILLMLSKLSKFGLDLSLFDKENHFPTYFIEELKETHCLLSKPNQVLSYSYDLLGSMFIYRKLFPDSSVSIDDIKKLFFQPPPQQQQQTNQNKSQSLNSTPNISSNNNNNNNNNNNNNNNNNNNNNNNSNSSQSLNNSTVIGNNSSHPYSYTIPTIIENCHSFVRYLYDPNDKYPDTDFRERFLSFLLSNLQYSQTIDILILIVTIVQPNSTLHQKFSQQISHQLFTNLSLGDSPFFIINSIEEVERLYVLIDKLHSSSLSAARWADALLSVSPQFVNKSTSSSSSSSSTATSPSSSSSSTTTTTTTSTNTTTTTPSDPLIRKRILLLRESILEAYELRWLPPLLVLLRTGCKLPEEARISAARQSRFLSNHDNKHQPGPSAAIISTLLLKLIRNAVSVFSLYKPKNVLFTQLINHLLYYSSIFFNKNLVPHISAQSLSNSPNFGATNTTTGSGSVSPLSSSSSSTITVTTMAMGSSLMKQPSSSLLLSPTVGGSSSTINLFMDSLKGILALDNGTIIQEITTSLLSYGGTSTSIHAVKLLLLLGRLPNQQVIEGADLVWKQYALSNNWQSCGCEHFLTHHIIFLLYCQSIVVLKSQNIELSETFLDKIVLLINESTVKKLIEFLVKGGSNSDQNQYIEIFTQHLVKIFSRVSNSLDLRKKQKLLRLLSYLPANRETLELLIVNFLQTDDISLQVSGERILNLNINNLIETYGPQNSLEIIQELYQIFMSNFVKSTTNQSVQSLFLKLIKNLSPSSAYQGITPTHNNVIEKLKEKELTNNNNNNNNNIIEKEEEEKEKEKEKVKEEEEGNNIEKLIQLQIETIKKNNQISDLKTVPWDYFVELIKSRYYSNNLNQHSFNNISILSQIDKDATISLLESKSLDGTLLPAFISSVYSLEFQDEIQAYLLKKVDTLLGLAGEIGTDPLKGGPPFLSDSVWDELRETTRCLSNFINKFGLGELCESKLLKVSTWAFIESFRRWRAEIINPYDFKLVLELSRSIILKSTASILTITDDSEWCSLLLCLYKLYCLVIRPHFGYISGQRELEENFSQDPTQISLTQSNEMIKFLVSLLTNVKSYTPMPGSHIGQLIFDSFIRAIIPLSTKAFDFIYPTVSTSSEDEFGGGIIPNCPIFSSNVSPEQNIKALVSFIHFVDIDDEFKFKQIWEMLEPIFVSPLGDAEMGSDEITEECKCLSLSGMATMIIKVCFEVTGVNSQVNLLETSTIPKSTYNHIPREKDLMFLNTPTGKKLNHLLSTIYGDMPQSELPLGGAIESVSSSSSMFGESSGNHQNMSSSSLSAYHFNIERSFSSNQFGSDQISLSDLRLFKTPYFIGVNFTPIIQKLLESFESFLVNPMCPPMLKKDILKSTVLLSDLFNREQVIWMFKTFTTIYAQDEIDDFLLKQHLILGICKGIAILQTPPNVGDSNAHSVGIFEMLKSALDHQNISLQVSALDGILYLLEGKVNKYIQGSLLQFLFRWIPTRLSSVPFPPVSLTLRVLATMFLMIEQYSREAEETLFTKRAVTTCIQLGQQQSTPVPIVYGVFRGLDRLLVSFSLSHSQRELISHFSLKSLPSENPIRSLLALGLMVTCIYTGDETGINSPSFTKSSISSIGSGGVNSLTAFEGSFSSSSIESPLNSALDSVMSSFIMDDNYSGSGGNSLINGGGGGDPLSSLDRQKFSRVNNMEKVKMLFDKIRLVSHFSYESHVLSEVLPVVIVDLFPSVDQVLSFILGEFLKQSKTNSKLMCQIISKVFDFLVENDTSENTNQHLINYWIIICLQNFFQIQNPTHCLWALTYLFLTSSPKRSFKLLESEFASKIQTNEKLFIIIASEFYFNKELSKENKQLFKDSFSKLKIEPYISLLKVINTTQ.

Disordered regions lie at residues P105–A197, Q536–G561, P1312–I1371, K1509–S1547, and K2005–E2037. Polar residues predominate over residues S115–Q139. Low complexity-rich tracts occupy residues S140–A197 and Q536–Q551. Over residues H552–G561 the composition is skewed to polar residues. Composition is skewed to low complexity over residues Q1315–S1368, S1510–S1547, and T2008–I2018.

Belongs to the huntingtin family.

It localises to the cytoplasm. It is found in the nucleus. In terms of biological role, may play a role in microtubule-mediated transport or vesicle function. In Dictyostelium discoideum (Social amoeba), this protein is HD protein homolog (htt).